The primary structure comprises 499 residues: Spore germination protein GerQA (499 aa).

Helical transmembrane passes span Leu285–His305, Ser376–Tyr396, and Phe409–Leu429.

Belongs to the GerABKA family.

It is found in the membrane. Functionally, required for the germination response to inosine. Has no role in L-alanine germination. This Bacillus cereus protein is Spore germination protein GerQA (gerQA).